Here is a 692-residue protein sequence, read N- to C-terminus: DNA ligase (692 aa).

Residues 35-39, 88-89, and E117 each bind NAD(+); these read DLVYD and SL. K119 functions as the N6-AMP-lysine intermediate in the catalytic mechanism. 4 residues coordinate NAD(+): R140, E176, K301, and K325. The Zn(2+) site is built by C416, C419, C434, and C439. In terms of domain architecture, BRCT spans 611 to 692; it reads LTNQSNSWAS…FDLIKNSKKT (82 aa).

Belongs to the NAD-dependent DNA ligase family. LigA subfamily. The cofactor is Mg(2+). Requires Mn(2+) as cofactor.

It carries out the reaction NAD(+) + (deoxyribonucleotide)n-3'-hydroxyl + 5'-phospho-(deoxyribonucleotide)m = (deoxyribonucleotide)n+m + AMP + beta-nicotinamide D-nucleotide.. Functionally, DNA ligase that catalyzes the formation of phosphodiester linkages between 5'-phosphoryl and 3'-hydroxyl groups in double-stranded DNA using NAD as a coenzyme and as the energy source for the reaction. It is essential for DNA replication and repair of damaged DNA. In Mesomycoplasma hyopneumoniae (strain 232) (Mycoplasma hyopneumoniae), this protein is DNA ligase.